Here is a 604-residue protein sequence, read N- to C-terminus: NADH-ubiquinone oxidoreductase chain 5 (604 aa).

16 helical membrane passes run 2 to 22, 41 to 61, 85 to 105, 115 to 135, 138 to 158, 169 to 189, 209 to 231, 239 to 259, 271 to 291, 299 to 318, 323 to 345, 364 to 384, 411 to 431, 455 to 475, 486 to 506, and 582 to 602; these read FSSLMLVSLLVLTLPIMLSIF, AFITSLIPTMMFIHSGQETII, MIFVPVALFVTWSIMEFSLWY, FFKYLLTFLITMMILVTANNL, LFIGWEGVGIMSFLLIGWWYG, AILYNRIGDIGFIMAMAWFLF, LPLLGLLLAATGKSAQFGLHPWL, TPVSALLHSSTMVVAGVFLLI, IQSLTLCLGAITTLFTAICAL, IIAFSTSSQLGLMIVTIGIN, AFLHICTHAFFKAMLFMCSGSII, MPFTTTSLIIGSLALTGIPFL, LIATSLTAVYSTRIIFFALLG, LLIGSIFAGFFISNNIYPTTV, LTALAVTILGFTLALELSLMT, and IKLYFLSFLITLTLSMLLFNL.

It belongs to the complex I subunit 5 family. As to quaternary structure, core subunit of respiratory chain NADH dehydrogenase (Complex I) which is composed of 45 different subunits.

Its subcellular location is the mitochondrion inner membrane. It carries out the reaction a ubiquinone + NADH + 5 H(+)(in) = a ubiquinol + NAD(+) + 4 H(+)(out). Core subunit of the mitochondrial membrane respiratory chain NADH dehydrogenase (Complex I) which catalyzes electron transfer from NADH through the respiratory chain, using ubiquinone as an electron acceptor. Essential for the catalytic activity and assembly of complex I. In Equus caballus (Horse), this protein is NADH-ubiquinone oxidoreductase chain 5 (MT-ND5).